Reading from the N-terminus, the 242-residue chain is Endoglucanase-5 (242 aa).

An N-terminal signal peptide occupies residues 1-17 (MKATLVLGSLIVGAVSA). Positions 18–182 (YKATTTRYYD…ETDPTPVLGN (165 aa)) are catalytic. The Nucleophile role is filled by D27. D134 acts as the Proton donor in catalysis. The interval 177–206 (TPVLGNDTGSTPPGSSPPATSSSPPSGGGQ) is disordered. N-linked (GlcNAc...) asparagine glycosylation occurs at N182. A compositionally biased stretch (low complexity) spans 184 to 201 (TGSTPPGSSPPATSSSPP). The region spanning 205–241 (GQQTLYGQCGGAGWTGPTTCQAPGTCKVQNQWYSQCL) is the CBM1 domain. Disulfide bonds link C213/C230 and C224/C240.

This sequence belongs to the glycosyl hydrolase 45 (cellulase K) family.

It catalyses the reaction Endohydrolysis of (1-&gt;4)-beta-D-glucosidic linkages in cellulose, lichenin and cereal beta-D-glucans.. The protein is Endoglucanase-5 (egl5) of Hypocrea jecorina (Trichoderma reesei).